Reading from the N-terminus, the 254-residue chain is 14-3-3-like protein RA215 (254 aa).

Belongs to the 14-3-3 family.

The chain is 14-3-3-like protein RA215 from Solanum tuberosum (Potato).